The chain runs to 432 residues: Enolase (432 aa).

Gln-167 is a (2R)-2-phosphoglycerate binding site. Residue Glu-209 is the Proton donor of the active site. Mg(2+) contacts are provided by Asp-246, Glu-290, and Asp-317. Residues Lys-342, Arg-371, Ser-372, and Lys-393 each coordinate (2R)-2-phosphoglycerate. Catalysis depends on Lys-342, which acts as the Proton acceptor.

It belongs to the enolase family. As to quaternary structure, component of the RNA degradosome, a multiprotein complex involved in RNA processing and mRNA degradation. It depends on Mg(2+) as a cofactor.

It is found in the cytoplasm. The protein resides in the secreted. The protein localises to the cell surface. It catalyses the reaction (2R)-2-phosphoglycerate = phosphoenolpyruvate + H2O. Its pathway is carbohydrate degradation; glycolysis; pyruvate from D-glyceraldehyde 3-phosphate: step 4/5. In terms of biological role, catalyzes the reversible conversion of 2-phosphoglycerate (2-PG) into phosphoenolpyruvate (PEP). It is essential for the degradation of carbohydrates via glycolysis. This is Enolase from Cronobacter sakazakii (strain ATCC BAA-894) (Enterobacter sakazakii).